Reading from the N-terminus, the 578-residue chain is Malonate--CoA ligase ACSF3, mitochondrial (578 aa).

The N-terminal 19 residues, 1–19, are a transit peptide targeting the mitochondrion; sequence MRVGAFLGRSLFSCSHVRG. Residue 205–213 participates in ATP binding; the sequence is TSGTTGRPK. Residues 394–413 form a disordered region; the sequence is QNPRKEGTSYTTHAQGDSTG. ATP-binding residues include Asp459, Arg473, and Lys565.

The protein belongs to the ATP-dependent AMP-binding enzyme family.

It localises to the mitochondrion. It catalyses the reaction tetracosanoate + ATP + CoA = tetracosanoyl-CoA + AMP + diphosphate. The catalysed reaction is malonate + ATP + CoA = malonyl-CoA + AMP + diphosphate. Functionally, catalyzes the initial reaction in intramitochondrial fatty acid synthesis, by activating malonate and methylmalonate, but not acetate, into their respective CoA thioester. May have some preference toward very-long-chain substrates. This Xenopus laevis (African clawed frog) protein is Malonate--CoA ligase ACSF3, mitochondrial.